The primary structure comprises 351 residues: Protein TBATA (351 aa).

Disordered regions lie at residues 16-40 (KAEL…PQKE), 167-186 (KKEK…KYSA), 195-216 (STRA…SSRH), and 292-351 (EVHE…RAES). Basic and acidic residues predominate over residues 167 to 181 (KKEKEQKEEPLREQG). Composition is skewed to basic and acidic residues over residues 292-302 (EVHEPPQEKQE) and 340-351 (TEKKTSKPRAES).

Belongs to the TBATA family.

It is found in the cytoplasm. It localises to the cytosol. May play a role in spermatid differentiation. Modulates thymic stromal cell proliferation and thymus function. The polypeptide is Protein TBATA (TBATA) (Homo sapiens (Human)).